The sequence spans 505 residues: ATP synthase subunit alpha (505 aa).

171–178 (GDRQTGKT) is a binding site for ATP.

Belongs to the ATPase alpha/beta chains family. In terms of assembly, F-type ATPases have 2 components, CF(1) - the catalytic core - and CF(0) - the membrane proton channel. CF(1) has five subunits: alpha(3), beta(3), gamma(1), delta(1), epsilon(1). CF(0) has three main subunits: a(1), b(2) and c(9-12). The alpha and beta chains form an alternating ring which encloses part of the gamma chain. CF(1) is attached to CF(0) by a central stalk formed by the gamma and epsilon chains, while a peripheral stalk is formed by the delta and b chains.

Its subcellular location is the cell inner membrane. The enzyme catalyses ATP + H2O + 4 H(+)(in) = ADP + phosphate + 5 H(+)(out). Its function is as follows. Produces ATP from ADP in the presence of a proton gradient across the membrane. The alpha chain is a regulatory subunit. The polypeptide is ATP synthase subunit alpha (Campylobacter hominis (strain ATCC BAA-381 / DSM 21671 / CCUG 45161 / LMG 19568 / NCTC 13146 / CH001A)).